The following is a 211-amino-acid chain: Uracil phosphoribosyltransferase (211 aa).

5-phospho-alpha-D-ribose 1-diphosphate contacts are provided by residues arginine 78, arginine 103, and 130–138; that span reads DPMLATGGT. Uracil is bound by residues isoleucine 195 and 200–202; that span reads GDA. Aspartate 201 contributes to the 5-phospho-alpha-D-ribose 1-diphosphate binding site.

This sequence belongs to the UPRTase family. Mg(2+) is required as a cofactor.

It carries out the reaction UMP + diphosphate = 5-phospho-alpha-D-ribose 1-diphosphate + uracil. It participates in pyrimidine metabolism; UMP biosynthesis via salvage pathway; UMP from uracil: step 1/1. With respect to regulation, allosterically activated by GTP. Catalyzes the conversion of uracil and 5-phospho-alpha-D-ribose 1-diphosphate (PRPP) to UMP and diphosphate. This is Uracil phosphoribosyltransferase from Kocuria rhizophila (strain ATCC 9341 / DSM 348 / NBRC 103217 / DC2201).